The following is a 100-amino-acid chain: Putative pterin-4-alpha-carbinolamine dehydratase (100 aa).

Belongs to the pterin-4-alpha-carbinolamine dehydratase family.

It carries out the reaction (4aS,6R)-4a-hydroxy-L-erythro-5,6,7,8-tetrahydrobiopterin = (6R)-L-erythro-6,7-dihydrobiopterin + H2O. In Afipia carboxidovorans (strain ATCC 49405 / DSM 1227 / KCTC 32145 / OM5) (Oligotropha carboxidovorans), this protein is Putative pterin-4-alpha-carbinolamine dehydratase.